The following is a 321-amino-acid chain: Queuosine 5'-phosphate N-glycosylase/hydrolase (321 aa).

The queuine site is built by F227, D229, and D296. D229 acts as the Nucleophile or transition state stabilizer in catalysis.

Belongs to the QNG1 protein family.

It carries out the reaction queuosine 5'-phosphate + H2O = queuine + D-ribose 5-phosphate. Catalyzes the hydrolysis of queuosine 5'-phosphate, releasing the nucleobase queuine (q). Is required for salvage of queuine from exogenous queuosine (Q) that is imported and then converted to queuosine 5'-phosphate intracellularly. In Dictyostelium discoideum (Social amoeba), this protein is Queuosine 5'-phosphate N-glycosylase/hydrolase.